A 212-amino-acid polypeptide reads, in one-letter code: Leucyl/phenylalanyl-tRNA--protein transferase (212 aa).

It belongs to the L/F-transferase family.

The protein localises to the cytoplasm. The catalysed reaction is N-terminal L-lysyl-[protein] + L-leucyl-tRNA(Leu) = N-terminal L-leucyl-L-lysyl-[protein] + tRNA(Leu) + H(+). It carries out the reaction N-terminal L-arginyl-[protein] + L-leucyl-tRNA(Leu) = N-terminal L-leucyl-L-arginyl-[protein] + tRNA(Leu) + H(+). The enzyme catalyses L-phenylalanyl-tRNA(Phe) + an N-terminal L-alpha-aminoacyl-[protein] = an N-terminal L-phenylalanyl-L-alpha-aminoacyl-[protein] + tRNA(Phe). In terms of biological role, functions in the N-end rule pathway of protein degradation where it conjugates Leu, Phe and, less efficiently, Met from aminoacyl-tRNAs to the N-termini of proteins containing an N-terminal arginine or lysine. This is Leucyl/phenylalanyl-tRNA--protein transferase from Flavobacterium johnsoniae (strain ATCC 17061 / DSM 2064 / JCM 8514 / BCRC 14874 / CCUG 350202 / NBRC 14942 / NCIMB 11054 / UW101) (Cytophaga johnsonae).